Here is a 404-residue protein sequence, read N- to C-terminus: MDYSEIMVRHGELSTKGKNRMRFINKLKNNIQDVLAPFPAITVRSDRDRTHVSLNGTDYQPIVEALKLVFGVQALSPVYKLEKSVPLLVTAVQDIMTSLYRDGLTFKIATKRSDHAFELDSRELNSLLGGAVFEVLPNIQAQMKHPDVTLKVEIRDEAAYISYEEIKGAGGLPVGTSGKGMLMLSGGIDSPVAGYLALKRGLDIEVVHFASPPYTSPGALAKAQNLTRRLTRFGGNIQFIEVPFTEIQEEIKNKAPEAYLMTLTRRFMMRITDAIREQRKGLVIVNGESLGQVASQTLESMQAINAVTSTPIIRPVVTMDKLEIIEMAQAIDTFDISIQPFEDCCTIFAPDRPKTNPKLGNAEKYEERFDIDGLVQRAVSGIVVTEITPEIVNDEVENLIDALL.

The 106-residue stretch at Gln-60 to Glu-165 folds into the THUMP domain. ATP is bound by residues Met-183–Leu-184, His-208–Phe-209, Arg-265, Gly-287, and Gln-296.

It belongs to the ThiI family.

It is found in the cytoplasm. It carries out the reaction [ThiI sulfur-carrier protein]-S-sulfanyl-L-cysteine + a uridine in tRNA + 2 reduced [2Fe-2S]-[ferredoxin] + ATP + H(+) = [ThiI sulfur-carrier protein]-L-cysteine + a 4-thiouridine in tRNA + 2 oxidized [2Fe-2S]-[ferredoxin] + AMP + diphosphate. The enzyme catalyses [ThiS sulfur-carrier protein]-C-terminal Gly-Gly-AMP + S-sulfanyl-L-cysteinyl-[cysteine desulfurase] + AH2 = [ThiS sulfur-carrier protein]-C-terminal-Gly-aminoethanethioate + L-cysteinyl-[cysteine desulfurase] + A + AMP + 2 H(+). The protein operates within cofactor biosynthesis; thiamine diphosphate biosynthesis. Its function is as follows. Catalyzes the ATP-dependent transfer of a sulfur to tRNA to produce 4-thiouridine in position 8 of tRNAs, which functions as a near-UV photosensor. Also catalyzes the transfer of sulfur to the sulfur carrier protein ThiS, forming ThiS-thiocarboxylate. This is a step in the synthesis of thiazole, in the thiamine biosynthesis pathway. The sulfur is donated as persulfide by IscS. The sequence is that of Probable tRNA sulfurtransferase from Streptococcus pyogenes serotype M49 (strain NZ131).